A 208-amino-acid polypeptide reads, in one-letter code: Small ribosomal subunit protein uS4 (208 aa).

Residues 31-51 (SALDKRAYGPGQHGQRRAKTS) are disordered. An S4 RNA-binding domain is found at 98 to 160 (RRLDNVVYRM…TKSNSQVVRA (63 aa)).

The protein belongs to the universal ribosomal protein uS4 family. As to quaternary structure, part of the 30S ribosomal subunit. Contacts protein S5. The interaction surface between S4 and S5 is involved in control of translational fidelity.

Its function is as follows. One of the primary rRNA binding proteins, it binds directly to 16S rRNA where it nucleates assembly of the body of the 30S subunit. In terms of biological role, with S5 and S12 plays an important role in translational accuracy. The chain is Small ribosomal subunit protein uS4 from Helicobacter pylori (strain ATCC 700392 / 26695) (Campylobacter pylori).